Consider the following 81-residue polypeptide: Acyl carrier protein (81 aa).

Residues 2 to 80 (ASNEEILAGL…DAVSFIANAQ (79 aa)) enclose the Carrier domain. Ser40 carries the post-translational modification O-(pantetheine 4'-phosphoryl)serine.

It belongs to the acyl carrier protein (ACP) family. Post-translationally, 4'-phosphopantetheine is transferred from CoA to a specific serine of apo-ACP by AcpS. This modification is essential for activity because fatty acids are bound in thioester linkage to the sulfhydryl of the prosthetic group.

It localises to the cytoplasm. It participates in lipid metabolism; fatty acid biosynthesis. Its function is as follows. Carrier of the growing fatty acid chain in fatty acid biosynthesis. In Paenarthrobacter aurescens (strain TC1), this protein is Acyl carrier protein.